The following is a 662-amino-acid chain: MAPSQTANKKPRMTLAQVSAYDDILTDALVDHVFYWTTVPKNRTSYHPSRGVKEEEISKILQEEVVLKKDLDSAEKRLLTTNGLKRFHNGLKTDKEKDDFRKHLRRYVQIYLPDCPWEVSSTNRYTIVSHEAAVTARRAIRRNEAIKYLSGVQVVITPEEEMAISSQKKDFSIVVSSRSKCTSLFMGPARFANHDCDANAKLMRTSHAGIEIVATRPIDAGEEITVTYGDNYFGENNCECLCKTCEDLLRNAWEPEEGTVPVQTGIGQSLSDGYSLRRRRRDDSISGSSRTPSVTPDMRPRITKANSRGSLLARDTSSVRSPSIDQTSRKRTHDVLATPPKTPAKRQKLGVQPIVSDSSSRGTSVTASESSGAVETDVTSPEKETPEPMQTPLKGASKKQNNEQSRLAPVSPQSTEGSRSPQQKNGALSSNRSSLDTMSIQAILNDPLESEVESEPESKMKKVTVVPPPVEPVAPIATSIEAVEEGQAADAEQSKRKKQPRRVHKEDTPPARVRTPGDYLLTPLLLSEPEMAWIQCTNCDEYFVQQNAYFTRASCPRCERHSKLYGYIWPKTDKAGPNDKEERILDHRTIHRFLDPDNERRVRNRKSFGASKTNTEEAEDVERGRKRFGTAGLMGRNASTTEDSGHRRSGRLRRVNSRFLDP.

The SET domain occupies 115 to 229; that stretch reads CPWEVSSTNR…AGEEITVTYG (115 aa). 3 disordered regions span residues 260–437, 484–516, and 601–662; these read VPVQ…SLDT, EEGQAADAEQSKRKKQPRRVHKEDTPPARVRTP, and RVRN…FLDP. Polar residues-rich tracts occupy residues 304–326, 355–379, and 398–437; these read KANSRGSLLARDTSSVRSPSIDQ, VSDSSSRGTSVTASESSGAVETDVT, and KKQNNEQSRLAPVSPQSTEGSRSPQQKNGALSSNRSSLDT. The segment covering 647–656 has biased composition (basic residues); that stretch reads RRSGRLRRVN.

Belongs to the class V-like SAM-binding methyltransferase superfamily. Histone-lysine methyltransferase family. Suvar4-20 subfamily.

It is found in the nucleus. Its subcellular location is the chromosome. The enzyme catalyses L-lysyl(20)-[histone H4] + 3 S-adenosyl-L-methionine = N(6),N(6),N(6)-trimethyl-L-lysyl(20)-[histone H4] + 3 S-adenosyl-L-homocysteine + 3 H(+). Histone methyltransferase that trimethylates 'Lys-20' of histone H4 to form H4K20me3. The chain is Histone-lysine N-methyltransferase SET9 (SET9) from Gibberella zeae (strain ATCC MYA-4620 / CBS 123657 / FGSC 9075 / NRRL 31084 / PH-1) (Wheat head blight fungus).